The sequence spans 556 residues: mRNA-capping enzyme subunit beta (556 aa).

Disordered regions lie at residues 1 to 28 (MKPS…DNNV) and 56 to 217 (LPPV…QKTS). Positions 63–74 (VSTSDTGNTSHT) are enriched in polar residues. Acidic residues predominate over residues 85–96 (ESDETDTDDEPG). 2 stretches are compositionally biased toward basic and acidic residues: residues 103–131 (TKFR…KDKQ) and 139–212 (IQLD…KDIF).

Belongs to the fungal TPase family. As to quaternary structure, heterodimer. The mRNA-capping enzyme is composed of two separate chains alpha and beta, respectively a mRNA guanylyltransferase and an mRNA 5'-triphosphate monophosphatase. Requires Mg(2+) as cofactor.

Its subcellular location is the nucleus. The catalysed reaction is a 5'-end triphospho-ribonucleoside in mRNA + H2O = a 5'-end diphospho-ribonucleoside in mRNA + phosphate + H(+). Its function is as follows. First step of mRNA capping. Converts the 5'-triphosphate end of a nascent mRNA chain into a diphosphate end. The chain is mRNA-capping enzyme subunit beta (CET1) from Kluyveromyces lactis (strain ATCC 8585 / CBS 2359 / DSM 70799 / NBRC 1267 / NRRL Y-1140 / WM37) (Yeast).